We begin with the raw amino-acid sequence, 90 residues long: UPF0335 protein bsl7135 (90 aa).

Belongs to the UPF0335 family.

This chain is UPF0335 protein bsl7135, found in Bradyrhizobium diazoefficiens (strain JCM 10833 / BCRC 13528 / IAM 13628 / NBRC 14792 / USDA 110).